A 168-amino-acid chain; its full sequence is Lipoprotein signal peptidase (168 aa).

2 helical membrane-spanning segments follow: residues 57 to 77 (PKEV…LYVF) and 86 to 106 (FILP…DRIT). Catalysis depends on residues Asp-112 and Asp-138. The helical transmembrane segment at 131-151 (WPIFNIADSAITIGACLLILF) threads the bilayer.

It belongs to the peptidase A8 family.

The protein resides in the cell inner membrane. The enzyme catalyses Release of signal peptides from bacterial membrane prolipoproteins. Hydrolyzes -Xaa-Yaa-Zaa-|-(S,diacylglyceryl)Cys-, in which Xaa is hydrophobic (preferably Leu), and Yaa (Ala or Ser) and Zaa (Gly or Ala) have small, neutral side chains.. The protein operates within protein modification; lipoprotein biosynthesis (signal peptide cleavage). This protein specifically catalyzes the removal of signal peptides from prolipoproteins. The protein is Lipoprotein signal peptidase of Chlorobium phaeobacteroides (strain DSM 266 / SMG 266 / 2430).